We begin with the raw amino-acid sequence, 311 residues long: Zeta-sarcoglycan (311 aa).

Residues Met-1–Tyr-50 are Cytoplasmic-facing. A helical; Signal-anchor for type II membrane protein transmembrane segment spans residues Phe-51 to Leu-71. Residues Lys-72–Asn-311 are Extracellular-facing. N-linked (GlcNAc...) asparagine glycans are attached at residues Asn-75 and Asn-123. A disulfide bridge connects residues Cys-285 and Cys-301.

Belongs to the sarcoglycan beta/delta/gamma/zeta family. Expressed in the heart, skeletal muscle and arterial vascular smooth muscle.

Its subcellular location is the cell membrane. It is found in the sarcolemma. The protein localises to the cytoplasm. The protein resides in the cytoskeleton. In terms of biological role, component of the sarcoglycan complex, a subcomplex of the dystrophin-glycoprotein complex which forms a link between the F-actin cytoskeleton and the extracellular matrix. May play a role in the maintenance of striated muscle membrane stability. In Mus musculus (Mouse), this protein is Zeta-sarcoglycan (Sgcz).